The primary structure comprises 596 residues: Elongation factor 4 (596 aa).

The tr-type G domain maps to E2–K183. GTP is bound by residues D14–T19 and N130–D133.

This sequence belongs to the TRAFAC class translation factor GTPase superfamily. Classic translation factor GTPase family. LepA subfamily.

It localises to the cell inner membrane. It catalyses the reaction GTP + H2O = GDP + phosphate + H(+). In terms of biological role, required for accurate and efficient protein synthesis under certain stress conditions. May act as a fidelity factor of the translation reaction, by catalyzing a one-codon backward translocation of tRNAs on improperly translocated ribosomes. Back-translocation proceeds from a post-translocation (POST) complex to a pre-translocation (PRE) complex, thus giving elongation factor G a second chance to translocate the tRNAs correctly. Binds to ribosomes in a GTP-dependent manner. In Campylobacter hominis (strain ATCC BAA-381 / DSM 21671 / CCUG 45161 / LMG 19568 / NCTC 13146 / CH001A), this protein is Elongation factor 4.